The primary structure comprises 557 residues: Formate--tetrahydrofolate ligase (557 aa).

Residue 44-51 (TPLGEGKS) participates in ATP binding.

Belongs to the formate--tetrahydrofolate ligase family.

It catalyses the reaction (6S)-5,6,7,8-tetrahydrofolate + formate + ATP = (6R)-10-formyltetrahydrofolate + ADP + phosphate. Its pathway is one-carbon metabolism; tetrahydrofolate interconversion. The protein is Formate--tetrahydrofolate ligase of Desulfotalea psychrophila (strain LSv54 / DSM 12343).